The primary structure comprises 354 residues: Probable L-ascorbate-6-phosphate lactonase UlaG (354 aa).

It belongs to the UlaG family. A divalent metal cation serves as cofactor.

The protein localises to the cytoplasm. It catalyses the reaction L-ascorbate 6-phosphate + H2O = 3-dehydro-L-gulonate 6-phosphate. Its pathway is cofactor degradation; L-ascorbate degradation; D-xylulose 5-phosphate from L-ascorbate: step 1/4. In terms of biological role, probably catalyzes the hydrolysis of L-ascorbate-6-P into 3-keto-L-gulonate-6-P. Is essential for L-ascorbate utilization under anaerobic conditions. The sequence is that of Probable L-ascorbate-6-phosphate lactonase UlaG from Salmonella heidelberg (strain SL476).